The chain runs to 360 residues: uncharacterized protein (360 aa).

An ABC transporter domain is found at 4–235 (LSLQHIQKIY…PANMFVAGFI (232 aa)). 37–44 (GPSGCGKS) is an ATP binding site.

Belongs to the ABC transporter superfamily.

This is an uncharacterized protein from Escherichia coli O6:H1 (strain CFT073 / ATCC 700928 / UPEC).